The following is a 252-amino-acid chain: Tricin synthase 1 (252 aa).

S-adenosyl-L-methionine is bound by residues serine 65, glutamate 87, 89 to 90, serine 95, and aspartate 113; that span reads GV. Residue aspartate 168 coordinates a divalent metal cation. An S-adenosyl-L-methionine-binding site is contributed by aspartate 170. A divalent metal cation-binding residues include aspartate 194 and asparagine 195.

The protein belongs to the class I-like SAM-binding methyltransferase superfamily. Cation-dependent O-methyltransferase family. CCoAMT subfamily. Mg(2+) serves as cofactor. The cofactor is Mn(2+). Co(2+) is required as a cofactor. As to expression, ubiquitous. Highest expression in stems and roots.

Its subcellular location is the nucleus. It catalyses the reaction tricetin + 2 S-adenosyl-L-methionine = 3',5'-di-O-methyltricetin + 2 S-adenosyl-L-homocysteine + 2 H(+). In terms of biological role, catalyzes the stepwise methylation of tricetin to its 3'-mono- and 3',5'-dimethyl ethers. No 3',4',5'-trimethylated ester derivatives are produced. Can use caffeoyl-CoA, 5-hydroxyferulic acid, luteolin, tricetin, quercetin, myrcetin and 7,8-dihydroxyflavone as substrates, but not naringenin, apigenin or kaempferol. The 2,3-double bond and the O-dihydroxyl group of the substrate are both required for catalytic activity of the enzyme. The chain is Tricin synthase 1 (ROMT-15) from Oryza sativa subsp. japonica (Rice).